A 250-amino-acid chain; its full sequence is tRNA (guanine-N(1)-)-methyltransferase (250 aa).

S-adenosyl-L-methionine-binding positions include G116 and 136–141 (IGDYVL).

The protein belongs to the RNA methyltransferase TrmD family. Homodimer.

It is found in the cytoplasm. The enzyme catalyses guanosine(37) in tRNA + S-adenosyl-L-methionine = N(1)-methylguanosine(37) in tRNA + S-adenosyl-L-homocysteine + H(+). In terms of biological role, specifically methylates guanosine-37 in various tRNAs. In Pseudomonas entomophila (strain L48), this protein is tRNA (guanine-N(1)-)-methyltransferase.